The chain runs to 841 residues: GRIP1-associated protein 1 (841 aa).

At Ala-2 the chain carries N-acetylalanine. 2 coiled-coil regions span residues 4 to 161 (ALSE…YGKE) and 208 to 641 (EQLQ…NSKS). 2 disordered regions span residues 532–551 (AEESLQQQQQEQEEALKQCR) and 558–580 (LKGKEEELQDVRDQLEQAQEERD). A phosphoserine mark is found at Ser-655, Ser-666, Ser-668, Ser-669, Ser-688, Ser-690, Ser-691, and Ser-692. Residues 681–706 (SSAVPARSLSSSPQAQPPRPAELSDE) form a disordered region. Residues 682 to 694 (SAVPARSLSSSPQ) are compositionally biased toward low complexity. 2 coiled-coil regions span residues 701–735 (AELSDEEVAELFQRLAETQQEKWMLEEKVKHLEVS) and 785–814 (DENLREMNKKLQNMLEEQLTKNMHLHKDME).

In terms of assembly, interacts with GRIP1, GRIP2 and AMPA receptors. Interacts (via C-terminus) with MAPK8/JNK1 and MAP3K1/MEKK1; the interaction promotes MAP3K1-mediated phosphorylation of MAPK8. Interacts (via N-terminus) with RAB4A (in GTP-bound form). Interacts (via C-terminus) with STX12. Proteolytically cleaved by caspase-3. A minor C-terminal proteolytic fragment of 30 kDa is produced. Proteolytic cleavage is required for JNK signaling activation.

Its subcellular location is the early endosome membrane. The protein localises to the recycling endosome membrane. The protein resides in the cell projection. It is found in the axon. It localises to the dendrite. Its subcellular location is the synapse. Functionally, regulates the endosomal recycling back to the neuronal plasma membrane, possibly by connecting early and late recycling endosomal domains and promoting segregation of recycling endosomes from early endosomal membranes. Involved in the localization of recycling endosomes to dendritic spines, thereby playing a role in the maintenance of dendritic spine morphology. Required for the activity-induced AMPA receptor recycling to dendrite membranes and for long-term potentiation and synaptic plasticity. In terms of biological role, functions as a scaffold protein to facilitate MAP3K1/MEKK1-mediated activation of the JNK1 kinase by phosphorylation, possibly by bringing MAP3K1/MEKK1 and JNK1 in close proximity. The protein is GRIP1-associated protein 1 of Homo sapiens (Human).